Reading from the N-terminus, the 315-residue chain is Aspartate carbamoyltransferase catalytic subunit (315 aa).

Residues arginine 65 and threonine 66 each coordinate carbamoyl phosphate. Lysine 93 serves as a coordination point for L-aspartate. Residues arginine 115, histidine 145, and glutamine 148 each coordinate carbamoyl phosphate. Residues arginine 179 and arginine 234 each contribute to the L-aspartate site. The carbamoyl phosphate site is built by glycine 275 and proline 276.

The protein belongs to the aspartate/ornithine carbamoyltransferase superfamily. ATCase family. Heterododecamer (2C3:3R2) of six catalytic PyrB chains organized as two trimers (C3), and six regulatory PyrI chains organized as three dimers (R2).

The enzyme catalyses carbamoyl phosphate + L-aspartate = N-carbamoyl-L-aspartate + phosphate + H(+). It functions in the pathway pyrimidine metabolism; UMP biosynthesis via de novo pathway; (S)-dihydroorotate from bicarbonate: step 2/3. Catalyzes the condensation of carbamoyl phosphate and aspartate to form carbamoyl aspartate and inorganic phosphate, the committed step in the de novo pyrimidine nucleotide biosynthesis pathway. This chain is Aspartate carbamoyltransferase catalytic subunit, found in Xanthomonas axonopodis pv. citri (strain 306).